The following is a 2061-amino-acid chain: Putative PWWP domain-containing DNA repair factor 4 (2061 aa).

Disordered stretches follow at residues 101–211 (TNLG…SRAR), 382–408 (ALGRDRSRARSAIASTPGTLQGNRSSV), 541–586 (TPGT…GDGS), 668–694 (PATLRGEKSRAHTSLAPAPGALRGDGS), 864–910 (PTPG…SERS), 1046–1072 (PGTMRGDSSTARTATAPSPGALRGDRS), 1159–1182 (ALHGDSSQAHTAIAPTPGTMRGDS), 1205–1383 (KAIA…RDDK), 1521–1548 (PGALHSDRSQTHTAIDPTPSVLRSDSSP), and 1602–1726 (KKGK…KLAN). Basic and acidic residues-rich tracts occupy residues 133–153 (PREDDWRCKGDLRRSLGKREN) and 162–173 (ESKRALRDDRSQ). The segment covering 397 to 408 (TPGTLQGNRSSV) has biased composition (polar residues). The span at 1051–1061 (GDSSTARTATA) shows a compositional bias: polar residues. The span at 1364–1373 (DSSQVHTTIA) shows a compositional bias: polar residues. Basic and acidic residues predominate over residues 1639–1648 (LKEETQDSRP). The segment covering 1656–1665 (PESSPFSGNI) has biased composition (polar residues). A PWWP domain is found at 1756 to 1817 (RGTMVWFKFQ…KHLDCKEKEK (62 aa)).

Belongs to the PWWP3A family.

This is Putative PWWP domain-containing DNA repair factor 4 from Homo sapiens (Human).